Here is a 203-residue protein sequence, read N- to C-terminus: Holliday junction branch migration complex subunit RuvA (203 aa).

Residues 1–63 form a domain I region; it reads MIGQLSGKVD…EEHIHLYGFL (63 aa). The tract at residues 64 to 142 is domain II; it reads TLEEKIFFNL…KISSGSAIIK (79 aa). Positions 143-149 are flexible linker; that stretch reads ESLNIKN. The segment at 150-203 is domain III; that stretch reads ITPVASNEVIKALVNLGFSRFEAQNAVQGIITQNPEISIDELIKTALKNRNSNF.

Belongs to the RuvA family. Homotetramer. Forms an RuvA(8)-RuvB(12)-Holliday junction (HJ) complex. HJ DNA is sandwiched between 2 RuvA tetramers; dsDNA enters through RuvA and exits via RuvB. An RuvB hexamer assembles on each DNA strand where it exits the tetramer. Each RuvB hexamer is contacted by two RuvA subunits (via domain III) on 2 adjacent RuvB subunits; this complex drives branch migration. In the full resolvosome a probable DNA-RuvA(4)-RuvB(12)-RuvC(2) complex forms which resolves the HJ.

It is found in the cytoplasm. Its function is as follows. The RuvA-RuvB-RuvC complex processes Holliday junction (HJ) DNA during genetic recombination and DNA repair, while the RuvA-RuvB complex plays an important role in the rescue of blocked DNA replication forks via replication fork reversal (RFR). RuvA specifically binds to HJ cruciform DNA, conferring on it an open structure. The RuvB hexamer acts as an ATP-dependent pump, pulling dsDNA into and through the RuvAB complex. HJ branch migration allows RuvC to scan DNA until it finds its consensus sequence, where it cleaves and resolves the cruciform DNA. The sequence is that of Holliday junction branch migration complex subunit RuvA from Rickettsia conorii (strain ATCC VR-613 / Malish 7).